A 365-amino-acid polypeptide reads, in one-letter code: MTENITTETRPSIYGLTRDQLIEWAIENGEKKFRATQVWDWLYRKRVQSFEEMSNLSAVFIDKLNEAFILNPLEQVVVQESADGTVKYLFMLPDKVMIETVLMRQSYGLSVCVTTQVGCNMGCTFCASGILKKERDVTAGEIVSQIMLVQKYFDERGLDERVSHVVVMGIGEPFDNYEHLMNFLRVINDDNGLAIGARHITVSTCGFMPAKIKEFAHENLQINLAISLHAPNNELRTSLMRITRNAPLEKLFEAIDYYTETTNRRVTYEYIMLSGENDSPEIAQQLADLIKPRNKLSYVNLIPYNPVAEHIKYERSTKDNTAKFYDVLKKNGINCVVRQEHGTDIDAACGQLRSKQIKKNKAKLA.

The active-site Proton acceptor is Glu-99. A Radical SAM core domain is found at 105-344; sequence QSYGLSVCVT…CVVRQEHGTD (240 aa). Cys-112 and Cys-349 are joined by a disulfide. 3 residues coordinate [4Fe-4S] cluster: Cys-119, Cys-123, and Cys-126. Residues 171-172, Ser-203, 227-229, and Asn-305 each bind S-adenosyl-L-methionine; these read GE and SLH. The S-methylcysteine intermediate role is filled by Cys-349.

Belongs to the radical SAM superfamily. RlmN family. Requires [4Fe-4S] cluster as cofactor.

The protein localises to the cytoplasm. The catalysed reaction is adenosine(2503) in 23S rRNA + 2 reduced [2Fe-2S]-[ferredoxin] + 2 S-adenosyl-L-methionine = 2-methyladenosine(2503) in 23S rRNA + 5'-deoxyadenosine + L-methionine + 2 oxidized [2Fe-2S]-[ferredoxin] + S-adenosyl-L-homocysteine. It catalyses the reaction adenosine(37) in tRNA + 2 reduced [2Fe-2S]-[ferredoxin] + 2 S-adenosyl-L-methionine = 2-methyladenosine(37) in tRNA + 5'-deoxyadenosine + L-methionine + 2 oxidized [2Fe-2S]-[ferredoxin] + S-adenosyl-L-homocysteine. Its function is as follows. Specifically methylates position 2 of adenine 2503 in 23S rRNA and position 2 of adenine 37 in tRNAs. This Lactococcus lactis subsp. cremoris (strain SK11) protein is Probable dual-specificity RNA methyltransferase RlmN.